Reading from the N-terminus, the 870-residue chain is Protein csx2 (870 aa).

The segment at 212–251 (TSPEISDAPPLSGNVDPLPINSPPLTNPVARDIDQTEPED) is disordered. The PH domain maps to 510-614 (TSAKQGLLLA…WIEAIQYSIS (105 aa)). S625, S653, and S655 each carry phosphoserine. Positions 647–672 (RVASVTSPSRHNSDSKEKKQTKSPSL) are disordered. Residues 657–666 (HNSDSKEKKQ) show a composition bias toward basic and acidic residues. An Arf-GAP domain is found at 670-791 (PSLVKTLKEM…RFIKSSFSHD (122 aa)). A C4-type zinc finger spans residues 686 to 710 (CADCNTTARVEWCAINFPVVLCIDC).

The protein is Protein csx2 (csx2) of Schizosaccharomyces pombe (strain 972 / ATCC 24843) (Fission yeast).